A 523-amino-acid polypeptide reads, in one-letter code: 2-hydroxyisoflavanone synthase (523 aa).

Residues Leu2–Pro22 form a helical membrane-spanning segment. Cys450 provides a ligand contact to heme.

Belongs to the cytochrome P450 family. Heme serves as cofactor.

It is found in the microsome membrane. The catalysed reaction is (2S)-liquiritigenin + reduced [NADPH--hemoprotein reductase] + O2 = (2R,3S)-2,4',7-trihydroxyisoflavanone + oxidized [NADPH--hemoprotein reductase] + H2O + H(+). It catalyses the reaction (2S)-naringenin + reduced [NADPH--hemoprotein reductase] + O2 = 2-hydroxy-2,3-dihydrogenistein + oxidized [NADPH--hemoprotein reductase] + H2O + H(+). Its function is as follows. 2-hydroxyisoflavanone synthase, which catalyzes the hydroxylation associated with 1,2-aryl migration of flavanones. Converts liquiritigenin and naringenin into highly unstable precursors of the isoflavones daidzein and genistein. This Glycyrrhiza uralensis (Chinese licorice) protein is 2-hydroxyisoflavanone synthase (CYP93C2).